Reading from the N-terminus, the 557-residue chain is Dihydroxy-acid dehydratase (557 aa).

C49 contacts [2Fe-2S] cluster. D81 provides a ligand contact to Mg(2+). C122 lines the [2Fe-2S] cluster pocket. Positions 123 and 124 each coordinate Mg(2+). An N6-carboxylysine modification is found at K124. Residue C194 coordinates [2Fe-2S] cluster. E446 contacts Mg(2+). S472 functions as the Proton acceptor in the catalytic mechanism.

This sequence belongs to the IlvD/Edd family. As to quaternary structure, homodimer. Requires [2Fe-2S] cluster as cofactor. Mg(2+) serves as cofactor.

The catalysed reaction is (2R)-2,3-dihydroxy-3-methylbutanoate = 3-methyl-2-oxobutanoate + H2O. It catalyses the reaction (2R,3R)-2,3-dihydroxy-3-methylpentanoate = (S)-3-methyl-2-oxopentanoate + H2O. The protein operates within amino-acid biosynthesis; L-isoleucine biosynthesis; L-isoleucine from 2-oxobutanoate: step 3/4. Its pathway is amino-acid biosynthesis; L-valine biosynthesis; L-valine from pyruvate: step 3/4. Its function is as follows. Functions in the biosynthesis of branched-chain amino acids. Catalyzes the dehydration of (2R,3R)-2,3-dihydroxy-3-methylpentanoate (2,3-dihydroxy-3-methylvalerate) into 2-oxo-3-methylpentanoate (2-oxo-3-methylvalerate) and of (2R)-2,3-dihydroxy-3-methylbutanoate (2,3-dihydroxyisovalerate) into 2-oxo-3-methylbutanoate (2-oxoisovalerate), the penultimate precursor to L-isoleucine and L-valine, respectively. This chain is Dihydroxy-acid dehydratase, found in Prochlorococcus marinus (strain MIT 9301).